Reading from the N-terminus, the 234-residue chain is Leucyl/phenylalanyl-tRNA--protein transferase (234 aa).

This sequence belongs to the L/F-transferase family.

It is found in the cytoplasm. It catalyses the reaction N-terminal L-lysyl-[protein] + L-leucyl-tRNA(Leu) = N-terminal L-leucyl-L-lysyl-[protein] + tRNA(Leu) + H(+). It carries out the reaction N-terminal L-arginyl-[protein] + L-leucyl-tRNA(Leu) = N-terminal L-leucyl-L-arginyl-[protein] + tRNA(Leu) + H(+). The catalysed reaction is L-phenylalanyl-tRNA(Phe) + an N-terminal L-alpha-aminoacyl-[protein] = an N-terminal L-phenylalanyl-L-alpha-aminoacyl-[protein] + tRNA(Phe). In terms of biological role, functions in the N-end rule pathway of protein degradation where it conjugates Leu, Phe and, less efficiently, Met from aminoacyl-tRNAs to the N-termini of proteins containing an N-terminal arginine or lysine. The polypeptide is Leucyl/phenylalanyl-tRNA--protein transferase (Klebsiella pneumoniae (strain 342)).